The primary structure comprises 161 residues: Small ribosomal subunit protein eS6 (161 aa).

Positions 119–161 are disordered; sequence VLLGEEEPEDADDDGDSDVDADEATDTDAGSEEDNDDDIADAE. Positions 122–161 are enriched in acidic residues; that stretch reads GEEEPEDADDDGDSDVDADEATDTDAGSEEDNDDDIADAE.

The protein belongs to the eukaryotic ribosomal protein eS6 family.

The sequence is that of Small ribosomal subunit protein eS6 from Haloquadratum walsbyi (strain DSM 16790 / HBSQ001).